Reading from the N-terminus, the 138-residue chain is Brain natriuretic peptide (138 aa).

Residues methionine 1–threonine 22 form the signal peptide. 2 disordered regions span residues glutamate 50 to aspartate 84 and serine 99 to arginine 138. Cysteine 111 and cysteine 127 form a disulfide bridge.

This sequence belongs to the natriuretic peptide family.

It localises to the secreted. Its function is as follows. Cardiac hormone which may function as a paracrine antifibrotic factor in the heart. Also plays a key role in cardiovascular homeostasis through natriuresis, diuresis, vasorelaxation, and inhibition of renin and aldosterone secretion. This Oreochromis mossambicus (Mozambique tilapia) protein is Brain natriuretic peptide (nppb).